Here is a 215-residue protein sequence, read N- to C-terminus: N-(5'-phosphoribosyl)anthranilate isomerase (215 aa).

The protein belongs to the TrpF family.

The enzyme catalyses N-(5-phospho-beta-D-ribosyl)anthranilate = 1-(2-carboxyphenylamino)-1-deoxy-D-ribulose 5-phosphate. The protein operates within amino-acid biosynthesis; L-tryptophan biosynthesis; L-tryptophan from chorismate: step 3/5. This chain is N-(5'-phosphoribosyl)anthranilate isomerase, found in Sinorhizobium medicae (strain WSM419) (Ensifer medicae).